Reading from the N-terminus, the 286-residue chain is Peroxisomal membrane protein pex14 (286 aa).

An SH3-binding motif is present at residues 61 to 69 (TSNFVSRDW). A coiled-coil region spans residues 122-214 (KILENLDEQT…REISSLRCLQ (93 aa)). The disordered stretch occupies residues 218–239 (KKDDTFATTSNSSIPVLENPLD).

Belongs to the peroxin-14 family. As to quaternary structure, interacts with PEX13 (via SH3 domain); forming the PEX13-PEX14 docking complex. Interacts with PEX5 (via WxxxF/Y motifs).

It localises to the peroxisome membrane. Its function is as follows. Component of the PEX13-PEX14 docking complex, a translocon channel that specifically mediates the import of peroxisomal cargo proteins bound to PEX5 receptor. The PEX13-PEX14 docking complex forms a large import pore which can be opened to a diameter of about 9 nm. Mechanistically, PEX5 receptor along with cargo proteins associates with the PEX14 subunit of the PEX13-PEX14 docking complex in the cytosol, leading to the insertion of the receptor into the organelle membrane with the concomitant translocation of the cargo into the peroxisome matrix. This is Peroxisomal membrane protein pex14 (pex14) from Schizosaccharomyces pombe (strain 972 / ATCC 24843) (Fission yeast).